A 107-amino-acid chain; its full sequence is Iron-binding protein IscA (107 aa).

Residues cysteine 35, cysteine 99, and cysteine 101 each coordinate Fe cation.

It belongs to the HesB/IscA family. Homodimer; may form tetramers and higher multimers. The cofactor is Fe cation.

Its function is as follows. Is able to transfer iron-sulfur clusters to apo-ferredoxin. Multiple cycles of [2Fe2S] cluster formation and transfer are observed, suggesting that IscA acts catalytically. Recruits intracellular free iron so as to provide iron for the assembly of transient iron-sulfur cluster in IscU in the presence of IscS, L-cysteine and the thioredoxin reductase system TrxA/TrxB. The chain is Iron-binding protein IscA from Pectobacterium carotovorum subsp. carotovorum (strain PC1).